The primary structure comprises 398 residues: Nicotinate phosphoribosyltransferase (398 aa).

A Phosphohistidine; by autocatalysis modification is found at histidine 221.

It belongs to the NAPRTase family. In terms of processing, transiently phosphorylated on a His residue during the reaction cycle. Phosphorylation strongly increases the affinity for substrates and increases the rate of nicotinate D-ribonucleotide production. Dephosphorylation regenerates the low-affinity form of the enzyme, leading to product release.

The catalysed reaction is nicotinate + 5-phospho-alpha-D-ribose 1-diphosphate + ATP + H2O = nicotinate beta-D-ribonucleotide + ADP + phosphate + diphosphate. It functions in the pathway cofactor biosynthesis; NAD(+) biosynthesis; nicotinate D-ribonucleotide from nicotinate: step 1/1. In terms of biological role, catalyzes the synthesis of beta-nicotinate D-ribonucleotide from nicotinate and 5-phospho-D-ribose 1-phosphate at the expense of ATP. This chain is Nicotinate phosphoribosyltransferase, found in Buchnera aphidicola subsp. Schizaphis graminum (strain Sg).